Consider the following 880-residue polypeptide: Valine--tRNA ligase (880 aa).

The 'HIGH' region motif lies at 49–59; it reads PNVTGKLHLGH. The short motif at 525–529 is the 'KMSKS' region element; that stretch reads KMSKS. Position 528 (K528) interacts with ATP. Positions 809 to 879 form a coiled coil; it reads LAGLLDLEEE…AVRARIKELK (71 aa).

It belongs to the class-I aminoacyl-tRNA synthetase family. ValS type 1 subfamily. In terms of assembly, monomer.

The protein localises to the cytoplasm. It carries out the reaction tRNA(Val) + L-valine + ATP = L-valyl-tRNA(Val) + AMP + diphosphate. Catalyzes the attachment of valine to tRNA(Val). As ValRS can inadvertently accommodate and process structurally similar amino acids such as threonine, to avoid such errors, it has a 'posttransfer' editing activity that hydrolyzes mischarged Thr-tRNA(Val) in a tRNA-dependent manner. The polypeptide is Valine--tRNA ligase (Halalkalibacterium halodurans (strain ATCC BAA-125 / DSM 18197 / FERM 7344 / JCM 9153 / C-125) (Bacillus halodurans)).